A 1071-amino-acid polypeptide reads, in one-letter code: Carbamoyl phosphate synthase large chain (1071 aa).

Residues 1–403 (MPKRTDLKSI…SFQKALRGLE (403 aa)) form a carboxyphosphate synthetic domain region. The ATP-grasp 1 domain maps to 133–328 (KEAMEKIGLS…IAKVAANWAV (196 aa)). Positions 169, 175, 176, 208, 210, 215, 241, 242, 243, 285, and 299 each coordinate ATP. Residues glutamine 285, glutamate 299, and asparagine 301 each contribute to the Mg(2+) site. Mn(2+) is bound by residues glutamine 285, glutamate 299, and asparagine 301. Residues 404 to 548 (TGLCGFNPAR…YSTYEEECES (145 aa)) form an oligomerization domain region. The carbamoyl phosphate synthetic domain stretch occupies residues 549 to 930 (RPSDRKKVMI…AYYKAQLGAG (382 aa)). Positions 673–864 (QKVLNDLGLR…LAKVGARCMA (192 aa)) constitute an ATP-grasp 2 domain. Residues arginine 709, phenylalanine 748, leucine 750, glutamate 755, glycine 780, isoleucine 781, histidine 782, serine 783, glutamine 823, and glutamate 835 each coordinate ATP. The Mg(2+) site is built by glutamine 823, glutamate 835, and asparagine 837. Positions 823, 835, and 837 each coordinate Mn(2+). The region spanning 931–1071 (ERLNPTGKIF…ELHGRLKNRN (141 aa)) is the MGS-like domain. The interval 931 to 1071 (ERLNPTGKIF…ELHGRLKNRN (141 aa)) is allosteric domain.

The protein belongs to the CarB family. Composed of two chains; the small (or glutamine) chain promotes the hydrolysis of glutamine to ammonia, which is used by the large (or ammonia) chain to synthesize carbamoyl phosphate. Tetramer of heterodimers (alpha,beta)4. Requires Mg(2+) as cofactor. Mn(2+) serves as cofactor.

It catalyses the reaction hydrogencarbonate + L-glutamine + 2 ATP + H2O = carbamoyl phosphate + L-glutamate + 2 ADP + phosphate + 2 H(+). The catalysed reaction is hydrogencarbonate + NH4(+) + 2 ATP = carbamoyl phosphate + 2 ADP + phosphate + 2 H(+). The protein operates within amino-acid biosynthesis; L-arginine biosynthesis; carbamoyl phosphate from bicarbonate: step 1/1. Its pathway is pyrimidine metabolism; UMP biosynthesis via de novo pathway; (S)-dihydroorotate from bicarbonate: step 1/3. In terms of biological role, large subunit of the glutamine-dependent carbamoyl phosphate synthetase (CPSase). CPSase catalyzes the formation of carbamoyl phosphate from the ammonia moiety of glutamine, carbonate, and phosphate donated by ATP, constituting the first step of 2 biosynthetic pathways, one leading to arginine and/or urea and the other to pyrimidine nucleotides. The large subunit (synthetase) binds the substrates ammonia (free or transferred from glutamine from the small subunit), hydrogencarbonate and ATP and carries out an ATP-coupled ligase reaction, activating hydrogencarbonate by forming carboxy phosphate which reacts with ammonia to form carbamoyl phosphate. This is Carbamoyl phosphate synthase large chain from Neisseria gonorrhoeae.